A 223-amino-acid polypeptide reads, in one-letter code: Coiled-coil domain-containing protein 124 (223 aa).

Positions 1–126 (MPKKFQGENT…AEKAKSHLEV (126 aa)) are disordered. Positions 15–82 (ARARRAEAKA…LLEEEDSKLK (68 aa)) form a coiled coil. Composition is skewed to basic and acidic residues over residues 18–74 (RRAE…QRLL) and 99–126 (QIED…HLEV). Residues serine 141 and serine 194 each carry the phosphoserine modification. Residues 204–223 (WLRSPDNPMNQRAVPFNAPK) form a disordered region.

Belongs to the CCDC124 family. As to quaternary structure, associates with translationally inactive ribosomes in the nonrotated state. Interacts with RASGEF1B. Ubiquitously expressed.

The protein localises to the cytoplasm. The protein resides in the cytoskeleton. It localises to the microtubule organizing center. It is found in the centrosome. Its subcellular location is the midbody. Its function is as follows. Ribosome-binding protein involved in ribosome hibernation: associates with translationally inactive ribosomes and stabilizes the nonrotated conformation of the 80S ribosome, thereby promoting ribosome preservation and storage. Also required for proper progression of late cytokinetic stages. The protein is Coiled-coil domain-containing protein 124 of Homo sapiens (Human).